Consider the following 638-residue polypeptide: Lactose permease (638 aa).

A permease region spans residues 1-470 (MHNHKVSGKQ…AQVIEELKSK (470 aa)). 12 helical membrane-spanning segments follow: residues 27 to 47 (FYGV…FSGL), 56 to 76 (IGLI…IDPI), 94 to 114 (WILI…TGIF), 121 to 141 (WILF…FYSL), 166 to 186 (LGAF…VPLV), 204 to 224 (WFAF…IVCF), 261 to 281 (LAYL…FYMY), 291 to 311 (FWVV…SFPV), 320 to 340 (WLFI…IFGH), 343 to 363 (VFLM…LVTV), 395 to 415 (FAGA…GMTG), and 429 to 449 (TFNM…IVVF). One can recognise a PTS EIIA type-1 domain in the interval 503–610 (SSVVDEDGKP…KDTIVIFYTQ (108 aa)). Histidine 558 is subject to Phosphohistidine; by HPr.

In the N-terminal section; belongs to the sodium:galactoside symporter (TC 2.A.2) family.

The protein localises to the cell membrane. Functionally, responsible for transport of beta-galactosides into the cell, with the concomitant uptake of protons (symport system), and also for transport of homologous and heterologous exchange of beta-galactosides. The sequence is that of Lactose permease (lacS) from Lactobacillus helveticus (Lactobacillus suntoryeus).